The chain runs to 87 residues: DNA-directed RNA polymerase subunit omega (87 aa).

The protein belongs to the RNA polymerase subunit omega family. The RNAP catalytic core consists of 2 alpha, 1 beta, 1 beta' and 1 omega subunit. When a sigma factor is associated with the core the holoenzyme is formed, which can initiate transcription.

The enzyme catalyses RNA(n) + a ribonucleoside 5'-triphosphate = RNA(n+1) + diphosphate. Functionally, promotes RNA polymerase assembly. Latches the N- and C-terminal regions of the beta' subunit thereby facilitating its interaction with the beta and alpha subunits. This chain is DNA-directed RNA polymerase subunit omega, found in Pseudomonas entomophila (strain L48).